A 259-amino-acid chain; its full sequence is MKRGLDMARSYNDHESSQETGPESPNSSTFNGMKALISSHSPKRSRRSVEKRVVNVPMKEMEGSRHKGDTTPPSDSWAWRKYGQKPIKGSPYPRGYYRCSSTKGCPARKQVERSRDDPTMILITYTSEHNHPWPLTSSTRNGPKPKPEPKPEPEPEVEPEAEEEDNKFMVLGRGIETTPSCVDEFAWFTEMETTSSTILESPIFSSEKKTAVSGADDVAVFFPMGEEDESLFADLGELPECSVVFRHRSSVVGSQVEIF.

Basic and acidic residues predominate over residues 1 to 17 (MKRGLDMARSYNDHESS). 2 disordered regions span residues 1 to 101 (MKRG…RCSS) and 126 to 165 (TSEHNHPWPLTSSTRNGPKPKPEPKPEPEPEVEPEAEEED). The span at 18-31 (QETGPESPNSSTFN) shows a compositional bias: polar residues. Residues 47–69 (RSVEKRVVNVPMKEMEGSRHKGD) are compositionally biased toward basic and acidic residues. A DNA-binding region (WRKY) is located at residues 68–134 (GDTTPPSDSW…YTSEHNHPWP (67 aa)). Positions 154–165 (EPEVEPEAEEED) are enriched in acidic residues.

It is found in the nucleus. In terms of biological role, transcription factor. Interacts specifically with the W box (5'-(T)TGAC[CT]-3'), a frequently occurring elicitor-responsive cis-acting element. The sequence is that of Probable WRKY transcription factor 65 (WRKY65) from Arabidopsis thaliana (Mouse-ear cress).